The sequence spans 131 residues: Fumarate reductase subunit C (131 aa).

The next 3 membrane-spanning stretches (helical) occupy residues 30–50, 58–78, and 109–129; these read EGTC…VFAL, AGFV…VTLI, and IVRG…AVAL.

The protein belongs to the FrdC family. In terms of assembly, part of an enzyme complex containing four subunits: a flavoprotein (FrdA), an iron-sulfur protein (FrdB), and two hydrophobic anchor proteins (FrdC and FrdD).

It localises to the cell inner membrane. Two distinct, membrane-bound, FAD-containing enzymes are responsible for the catalysis of fumarate and succinate interconversion; fumarate reductase is used in anaerobic growth, and succinate dehydrogenase is used in aerobic growth. Anchors the catalytic components of the fumarate reductase complex to the cell inner membrane, binds quinones. In Proteus vulgaris, this protein is Fumarate reductase subunit C.